We begin with the raw amino-acid sequence, 252 residues long: Geranylgeranylglyceryl phosphate synthase (252 aa).

Asp-26 and Ser-55 together coordinate Mg(2+). Residues 174-180, 205-206, and 227-228 each bind sn-glycerol 1-phosphate; these read YLEAGSG, GG, and GT.

The protein belongs to the GGGP/HepGP synthase family. Group II subfamily. It depends on Mg(2+) as a cofactor.

The protein localises to the cytoplasm. It carries out the reaction sn-glycerol 1-phosphate + (2E,6E,10E)-geranylgeranyl diphosphate = sn-3-O-(geranylgeranyl)glycerol 1-phosphate + diphosphate. It participates in membrane lipid metabolism; glycerophospholipid metabolism. Prenyltransferase that catalyzes the transfer of the geranylgeranyl moiety of geranylgeranyl diphosphate (GGPP) to the C3 hydroxyl of sn-glycerol-1-phosphate (G1P). This reaction is the first ether-bond-formation step in the biosynthesis of archaeal membrane lipids. This chain is Geranylgeranylglyceryl phosphate synthase, found in Thermococcus gammatolerans (strain DSM 15229 / JCM 11827 / EJ3).